Reading from the N-terminus, the 451-residue chain is MNLEVKKIDTANSHLSAKPSIEDLKKRYDKIAQKIAQKVKIDGFRRGKVPLSLVKTRYQAQIEQDAQEEMFQEILKNALKELGIESKDLIGSPNLTKFEKKDTHFEIEADIGLKPTIVLDKIKECVPSVEVEAVDEEKVNERLKQLAKDYAKFIDTDAQRKAQNDDKLTIDFEGFIDNVPFEGGKTQNFSLILGSKQMLEDFEKALLGMQAGEEKEFSLTFPSDYHAKHLAGKEALFKVKLHQIQAREVLEINDELAKIVLANEENAALELLKERVKGQLFLENKVRLYNEELKEKLIENLDEKILFDLPKTIIEQEMDLLFRNALYSMQAEEVKSLQENQEKAKEKRESFRNDATKSVKITFIIDALAKEEKIGVHDNEVFQTLYYEALMTGQNPENLIEQYRRNNMLAAVKMAMIEDRVLTYFLDKNLSKEQQEILEKMRPNAQKTQVS.

A PPIase FKBP-type domain is found at 165 to 250 (DDKLTIDFEG…LHQIQAREVL (86 aa)).

Belongs to the FKBP-type PPIase family. Tig subfamily.

It is found in the cytoplasm. It carries out the reaction [protein]-peptidylproline (omega=180) = [protein]-peptidylproline (omega=0). Functionally, involved in protein export. Acts as a chaperone by maintaining the newly synthesized protein in an open conformation. Functions as a peptidyl-prolyl cis-trans isomerase. In Helicobacter acinonychis (strain Sheeba), this protein is Trigger factor.